The chain runs to 274 residues: NAD kinase (274 aa).

Asp-59 serves as the catalytic Proton acceptor. NAD(+)-binding positions include Asp-59–Gly-60, Asn-133–Asp-134, Arg-144, Asp-163, Thr-174–Ser-179, and Gln-233.

Belongs to the NAD kinase family. A divalent metal cation serves as cofactor.

The protein resides in the cytoplasm. The catalysed reaction is NAD(+) + ATP = ADP + NADP(+) + H(+). Involved in the regulation of the intracellular balance of NAD and NADP, and is a key enzyme in the biosynthesis of NADP. Catalyzes specifically the phosphorylation on 2'-hydroxyl of the adenosine moiety of NAD to yield NADP. The protein is NAD kinase of Aquifex aeolicus (strain VF5).